Here is a 32-residue protein sequence, read N- to C-terminus: MSDIN-like toxin proprotein 11 (32 aa).

The propeptide occupies 1–10 (MSDINATRLP). Positions 1-32 (MSDINATRLPGMEPPSPMPCVGDADNFTLTRG) are disordered. Residues 11 to 19 (GMEPPSPMP) constitute a cross-link (cyclopeptide (Gly-Pro)). The propeptide occupies 20–32 (CVGDADNFTLTRG).

Belongs to the MSDIN fungal toxin family. In terms of processing, processed by the macrocyclase-peptidase enzyme POPB to yield a toxic cyclic nonapeptide. POPB first removes 10 residues from the N-terminus. Conformational trapping of the remaining peptide forces the enzyme to release this intermediate rather than proceed to macrocyclization. The enzyme rebinds the remaining peptide in a different conformation and catalyzes macrocyclization of the N-terminal 9 residues.

In terms of biological role, probable toxin that belongs to the MSDIN-like toxin family responsible for a large number of food poisoning cases and deaths. This chain is MSDIN-like toxin proprotein 11, found in Amanita bisporigera (Destroying angel).